A 793-amino-acid chain; its full sequence is Peroxidase-like protein (793 aa).

A signal peptide spans 1–20; that stretch reads MNLFICHVFLLLLHGYLIIC.

Belongs to the peroxidase family. Prismatic layer of shell (at protein level). Expressed primarily in the mantle with highest level in the mantle edge and lower level in the mantle pallium.

The protein localises to the secreted. The polypeptide is Peroxidase-like protein (Margaritifera margaritifera (Freshwater pearl mussel)).